The following is a 261-amino-acid chain: (S)-ureidoglycine aminohydrolase (261 aa).

Positions 184-230 constitute a Cupin type-2 domain; the sequence is LSFAPGASHGYIETHVQEHGAYILSGQGVYNLDNNWIPVKKGDYIFM. Mn(2+) is bound by residues E196, H198, H202, and Q236. Substrate is bound at residue E196. Residues Q236, Y249, and K253 each contribute to the substrate site.

This sequence belongs to the UGHY family. As to quaternary structure, monomer. Mn(2+) serves as cofactor.

The protein localises to the cytoplasm. It catalyses the reaction (S)-2-ureidoglycine + H2O = (S)-ureidoglycolate + NH4(+). In terms of biological role, involved in the anaerobic nitrogen utilization via the assimilation of allantoin. Catalyzes the second stereospecific hydrolysis reaction (deamination) of the allantoin degradation pathway, producing S-ureidoglycolate and ammonia from S-ureidoglycine. The polypeptide is (S)-ureidoglycine aminohydrolase (allE) (Escherichia coli (strain K12)).